A 285-amino-acid polypeptide reads, in one-letter code: Bifunctional protein FolD (285 aa).

NADP(+)-binding positions include 165–167 (GRS) and Ser-190.

Belongs to the tetrahydrofolate dehydrogenase/cyclohydrolase family. Homodimer.

The catalysed reaction is (6R)-5,10-methylene-5,6,7,8-tetrahydrofolate + NADP(+) = (6R)-5,10-methenyltetrahydrofolate + NADPH. The enzyme catalyses (6R)-5,10-methenyltetrahydrofolate + H2O = (6R)-10-formyltetrahydrofolate + H(+). The protein operates within one-carbon metabolism; tetrahydrofolate interconversion. In terms of biological role, catalyzes the oxidation of 5,10-methylenetetrahydrofolate to 5,10-methenyltetrahydrofolate and then the hydrolysis of 5,10-methenyltetrahydrofolate to 10-formyltetrahydrofolate. The protein is Bifunctional protein FolD of Burkholderia ambifaria (strain ATCC BAA-244 / DSM 16087 / CCUG 44356 / LMG 19182 / AMMD) (Burkholderia cepacia (strain AMMD)).